The sequence spans 126 residues: Holo-[acyl-carrier-protein] synthase (126 aa).

Positions 9 and 58 each coordinate Mg(2+).

The protein belongs to the P-Pant transferase superfamily. AcpS family. It depends on Mg(2+) as a cofactor.

The protein localises to the cytoplasm. It catalyses the reaction apo-[ACP] + CoA = holo-[ACP] + adenosine 3',5'-bisphosphate + H(+). In terms of biological role, transfers the 4'-phosphopantetheine moiety from coenzyme A to a Ser of acyl-carrier-protein. This chain is Holo-[acyl-carrier-protein] synthase, found in Shewanella frigidimarina (strain NCIMB 400).